Reading from the N-terminus, the 92-residue chain is Protein S100-A6 (92 aa).

EF-hand domains are found at residues 12 to 47 (LVAI…IGAE) and 48 to 83 (LEDS…LAMI). 2 residues coordinate Ca(2+): T28 and E33. An N6-acetyllysine modification is found at K40. Residues D61, N63, D65, and E72 each coordinate Ca(2+).

The protein belongs to the S-100 family. Homodimer; head to tail assembly of 2 subunits. Interacts with CACYBP in a calcium-dependent manner. Interacts with ANXA2 and ANXA11 (via N-terminus). Interacts with SUGT1. Interacts with TP53; has higher affinity for TP53 that is phosphorylated on its N-terminal domain, and lower affinity for TP53 that is phosphorylated on its C-terminal domain. Interacts with tropomyosin. Interacts with FKBP4. Interacts with PPP5C (via TPR repeats); the interaction is calcium-dependent and modulates PPP5C activity. Interacts with TPPP; this interaction inhibits TPPP dimerization.

The protein resides in the nucleus envelope. It is found in the cytoplasm. It localises to the cell membrane. May function as calcium sensor and modulator, contributing to cellular calcium signaling. May function by interacting with other proteins, such as TPR-containing proteins, and indirectly play a role in many physiological processes such as the reorganization of the actin cytoskeleton and in cell motility. Binds 2 calcium ions. Calcium binding is cooperative. The polypeptide is Protein S100-A6 (S100A6) (Equus caballus (Horse)).